Consider the following 257-residue polypeptide: MLPSDLVNYKKKSRKIIALTAWDSISGSIAEQANVDLVLVGDSLAMVCLGYQSTLPITLENIIYHTNAVSRGFKKKIEEQPLVVSDMPFMTYQCGEDKAVEYAGKIIQSTYAKAVKVEGAEPEIQKVISRLIRMGIPVMGHIGLTPQSYLNIGLRKQGESLASQEKIKKEASILEELGCFSIVLEHIPDLLAKEIQNSLTIPTIGIGAGNYCDGQVRVTADLLGLNDDQPPFCQPIIQGKKLFKDKLKEWVDSERLS.

Residues D42 and D86 each coordinate Mg(2+). Residues 42–43 (DS), D86, and K116 contribute to the 3-methyl-2-oxobutanoate site. Residue E118 participates in Mg(2+) binding. Catalysis depends on E185, which acts as the Proton acceptor.

This sequence belongs to the PanB family. In terms of assembly, homodecamer; pentamer of dimers. It depends on Mg(2+) as a cofactor.

It is found in the cytoplasm. It carries out the reaction 3-methyl-2-oxobutanoate + (6R)-5,10-methylene-5,6,7,8-tetrahydrofolate + H2O = 2-dehydropantoate + (6S)-5,6,7,8-tetrahydrofolate. The protein operates within cofactor biosynthesis; (R)-pantothenate biosynthesis; (R)-pantoate from 3-methyl-2-oxobutanoate: step 1/2. Catalyzes the reversible reaction in which hydroxymethyl group from 5,10-methylenetetrahydrofolate is transferred onto alpha-ketoisovalerate to form ketopantoate. The polypeptide is 3-methyl-2-oxobutanoate hydroxymethyltransferase (Prochlorococcus marinus (strain MIT 9301)).